We begin with the raw amino-acid sequence, 3232 residues long: D-lysergyl-peptide-synthetase subunit 1 (3232 aa).

Residues Gly-90–Ile-474 are adenylation (A) domain 1. The region spanning Arg-617 to Thr-686 is the Carrier 1 domain. An O-(pantetheine 4'-phosphoryl)serine modification is found at Ser-649. A condensation (C) domain 1 region spans residues Glu-731–Asn-1122. The interval Gln-1165–Arg-1572 is adenylation (A) domain 2. The Carrier 2 domain occupies Thr-1717–Gly-1785. Residue Ser-1749 is modified to O-(pantetheine 4'-phosphoryl)serine. The condensation (C) domain 2 stretch occupies residues Glu-1835 to Met-2252. The adenylation (A) domain 3 stretch occupies residues Gln-2276–Arg-2675. The region spanning Met-2810–Glu-2878 is the Carrier 3 domain. The residue at position 2842 (Ser-2842) is an O-(pantetheine 4'-phosphoryl)serine. Residues Leu-2943–Ile-3218 form a cyclization (Cyc) domain region.

This sequence belongs to the NRP synthetase family.

The protein operates within alkaloid biosynthesis; ergot alkaloid biosynthesis. Functionally, D-lysergyl-peptide-synthetase subunit 1; part of the gene cluster that mediates the biosynthesis of fungal ergot alkaloid. DmaW catalyzes the first step of ergot alkaloid biosynthesis by condensing dimethylallyl diphosphate (DMAP) and tryptophan to form 4-dimethylallyl-L-tryptophan. The second step is catalyzed by the methyltransferase easF that methylates 4-dimethylallyl-L-tryptophan in the presence of S-adenosyl-L-methionine, resulting in the formation of 4-dimethylallyl-L-abrine. The catalase easC and the FAD-dependent oxidoreductase easE then transform 4-dimethylallyl-L-abrine to chanoclavine-I which is further oxidized by easD in the presence of NAD(+), resulting in the formation of chanoclavine-I aldehyde. Agroclavine dehydrogenase easG then mediates the conversion of chanoclavine-I aldehyde to agroclavine via a non-enzymatic adduct reaction: the substrate is an iminium intermediate that is formed spontaneously from chanoclavine-I aldehyde in the presence of glutathione. The presence of easA is not required to complete this reaction. Further conversion of agroclavine to paspalic acid is a two-step process involving oxidation of agroclavine to elymoclavine and of elymoclavine to paspalic acid, the second step being performed by the elymoclavine oxidase cloA. Paspalic acid is then further converted to D-lysergic acid. Ergopeptines are assembled from D-lysergic acid and three different amino acids by the D-lysergyl-peptide-synthetases composed each of a monomudular and a trimodular nonribosomal peptide synthetase subunit. LpsB and lpsC encode the monomodular subunits responsible for D-lysergic acid activation and incorporation into the ergopeptine backbone. LpsA1 and A2 subunits encode the trimodular nonribosomal peptide synthetase assembling the tripeptide portion of ergopeptines. LpsA1 is responsible for formation of the major ergopeptine, ergotamine, and lpsA2 for alpha-ergocryptine, the minor ergopeptine of the total alkaloid mixture elaborated by C.purpurea. D-lysergyl-tripeptides are assembled by the nonribosomal peptide synthetases and released as N-(D-lysergyl-aminoacyl)-lactams. Cyclolization of the D-lysergyl-tripeptides is performed by the Fe(2+)/2-ketoglutarate-dependent dioxygenase easH which introduces a hydroxyl group into N-(D-lysergyl-aminoacyl)-lactam at alpha-C of the aminoacyl residue followed by spontaneous condensation with the terminal lactam carbonyl group. In Claviceps purpurea (Ergot fungus), this protein is D-lysergyl-peptide-synthetase subunit 1.